The primary structure comprises 745 residues: Elongation factor G, mitochondrial (745 aa).

The 278-residue stretch at 40-317 (ERIRNIGISA…AVLDYLPNPG (278 aa)) folds into the tr-type G domain. GTP is bound by residues 49-56 (AHIDSGKT), 116-120 (DTPGH), and 170-173 (NKLD).

This sequence belongs to the TRAFAC class translation factor GTPase superfamily. Classic translation factor GTPase family. EF-G/EF-2 subfamily.

The protein localises to the mitochondrion. Its pathway is protein biosynthesis; polypeptide chain elongation. In terms of biological role, mitochondrial GTPase that catalyzes the GTP-dependent ribosomal translocation step during translation elongation. During this step, the ribosome changes from the pre-translocational (PRE) to the post-translocational (POST) state as the newly formed A-site-bound peptidyl-tRNA and P-site-bound deacylated tRNA move to the P and E sites, respectively. Catalyzes the coordinated movement of the two tRNA molecules, the mRNA and conformational changes in the ribosome. Essential during development as it acts as a retrograde signal from mitochondria to the nucleus to slow down cell proliferation if mitochondrial energy output is low. This is Elongation factor G, mitochondrial from Drosophila melanogaster (Fruit fly).